Consider the following 249-residue polypeptide: Phosphate import ATP-binding protein PstB (249 aa).

Residues 3 to 244 (IEANDVHVYY…PKKKRTQNYI (242 aa)) form the ABC transporter domain. ATP is bound at residue 35–42 (GPSGCGKS).

This sequence belongs to the ABC transporter superfamily. Phosphate importer (TC 3.A.1.7) family. As to quaternary structure, the complex is composed of two ATP-binding proteins (PstB), two transmembrane proteins (PstC and PstA) and a solute-binding protein (PstS).

The protein localises to the cell inner membrane. The enzyme catalyses phosphate(out) + ATP + H2O = ADP + 2 phosphate(in) + H(+). Functionally, part of the ABC transporter complex PstSACB involved in phosphate import. Responsible for energy coupling to the transport system. This Cytophaga hutchinsonii (strain ATCC 33406 / DSM 1761 / CIP 103989 / NBRC 15051 / NCIMB 9469 / D465) protein is Phosphate import ATP-binding protein PstB.